We begin with the raw amino-acid sequence, 275 residues long: Type III pantothenate kinase (275 aa).

9–16 (DIGNTRLK) contributes to the ATP binding site. Residues Tyr-114 and 121-124 (GVDR) contribute to the substrate site. Catalysis depends on Asp-123, which acts as the Proton acceptor. Residue Thr-147 participates in ATP binding. Thr-209 contributes to the substrate binding site.

It belongs to the type III pantothenate kinase family. As to quaternary structure, homodimer. Requires NH4(+) as cofactor. K(+) serves as cofactor.

The protein localises to the cytoplasm. The catalysed reaction is (R)-pantothenate + ATP = (R)-4'-phosphopantothenate + ADP + H(+). It functions in the pathway cofactor biosynthesis; coenzyme A biosynthesis; CoA from (R)-pantothenate: step 1/5. Catalyzes the phosphorylation of pantothenate (Pan), the first step in CoA biosynthesis. The protein is Type III pantothenate kinase of Cupriavidus pinatubonensis (strain JMP 134 / LMG 1197) (Cupriavidus necator (strain JMP 134)).